Here is a 549-residue protein sequence, read N- to C-terminus: Oxygen-dependent choline dehydrogenase (549 aa).

4-33 is a binding site for FAD; it reads DFVIIGSGSAGSAMASRLSEDGKHTVIVLE. The active-site Proton acceptor is His465.

The protein belongs to the GMC oxidoreductase family. FAD serves as cofactor.

The catalysed reaction is choline + A = betaine aldehyde + AH2. The enzyme catalyses betaine aldehyde + NAD(+) + H2O = glycine betaine + NADH + 2 H(+). It participates in amine and polyamine biosynthesis; betaine biosynthesis via choline pathway; betaine aldehyde from choline (cytochrome c reductase route): step 1/1. Involved in the biosynthesis of the osmoprotectant glycine betaine. Catalyzes the oxidation of choline to betaine aldehyde and betaine aldehyde to glycine betaine at the same rate. This chain is Oxygen-dependent choline dehydrogenase, found in Rhizobium rhizogenes (strain K84 / ATCC BAA-868) (Agrobacterium radiobacter).